We begin with the raw amino-acid sequence, 498 residues long: ATP synthase subunit beta, chloroplastic (498 aa).

172–179 (GGAGVGKT) contacts ATP.

It belongs to the ATPase alpha/beta chains family. As to quaternary structure, F-type ATPases have 2 components, CF(1) - the catalytic core - and CF(0) - the membrane proton channel. CF(1) has five subunits: alpha(3), beta(3), gamma(1), delta(1), epsilon(1). CF(0) has four main subunits: a(1), b(1), b'(1) and c(9-12).

The protein resides in the plastid. Its subcellular location is the chloroplast thylakoid membrane. It catalyses the reaction ATP + H2O + 4 H(+)(in) = ADP + phosphate + 5 H(+)(out). Produces ATP from ADP in the presence of a proton gradient across the membrane. The catalytic sites are hosted primarily by the beta subunits. This chain is ATP synthase subunit beta, chloroplastic, found in Whiteheadia bifolia (Elephants ears).